A 152-amino-acid chain; its full sequence is Neuromedin-S (152 aa).

The first 26 residues, 1 to 26 (MKHPFPQFPPILVIYCFCMLQIPSSG), serve as a signal peptide directing secretion. 3 consecutive propeptides follow at residues 27–69 (ASPP…VYKR), 70–105 (FLFHYSRAWKSTHPVNSEFAPVHPLMRLAAKLPSRR), and 106–108 (MKR). Residue Asn144 is modified to Asparagine amide. A propeptide spanning residues 147-152 (YTDKVQ) is cleaved from the precursor.

It belongs to the NmU family. In terms of tissue distribution, expressed in the CNS, spleen and testis. Specifically expressed in the suprachiasmatic nuclei (SCN) of the hypothalamus.

It localises to the secreted. In terms of biological role, implicated in the regulation of circadian rhythms through autocrine and/or paracrine actions. Stimulates the contraction of rectum and elevation of blood pressure. This is Neuromedin-S (Nms) from Rattus norvegicus (Rat).